We begin with the raw amino-acid sequence, 154 residues long: MKIELCLYSGYKIYPGHGKRYARTDGRVYTFLNAKCEASFLMKRNPREITWTVLYRRKHKKGQQEEIQKKRSRRTAKFQRAITGASLTEIMAKRNQKPEVRKAQREQAVKAAKEKKKADQVGKRKAPAKARATAPKTKAPKTVKAAAPRVGGKR.

The segment at 92-154 (AKRNQKPEVR…AAAPRVGGKR (63 aa)) is disordered. Basic and acidic residues predominate over residues 96-122 (QKPEVRKAQREQAVKAAKEKKKADQVG). The span at 129 to 154 (KARATAPKTKAPKTVKAAAPRVGGKR) shows a compositional bias: low complexity.

This sequence belongs to the eukaryotic ribosomal protein eL24 family.

The chain is Large ribosomal subunit protein eL24 (RPL24) from Branchiostoma belcheri (Amphioxus).